The primary structure comprises 885 residues: DNA replication licensing factor REC (885 aa).

Residues 36-76 are disordered; sequence RVIPAGGNRQPNQGEPGAPDAPSVPPATRQPRGWSRTAGKR. The segment at 281–308 adopts a C4-type zinc-finger fold; sequence CSRCQMEIAMRQRGTFQPRPYQCKRSEC. The MCM domain maps to 430 to 627; that stretch reads SFKLLVQSIA…ERDMSLTAHV (198 aa). Position 473–480 (473–480) interacts with ATP; sequence GDPGIGKT. The span at 796-805 shows a compositional bias: polar residues; the sequence is SLKEGSSRQG. Residues 796-818 form a disordered region; the sequence is SLKEGSSRQGTRGGGGAGGGAGK. The segment covering 806 to 817 has biased composition (gly residues); that stretch reads TRGGGGAGGGAG.

The protein belongs to the MCM family.

The protein resides in the nucleus. Functionally, required for meiotic DNA recombination in females. Probably not involved in DNA repair and recombination in somatic cells. The protein is DNA replication licensing factor REC (rec) of Drosophila melanogaster (Fruit fly).